A 353-amino-acid polypeptide reads, in one-letter code: Heterogeneous nuclear ribonucleoproteins A2/B1 (353 aa).

An N-acetylmethionine modification is found at M1. Phosphothreonine is present on T4. The short motif at 9 to 15 is the Nuclear localization signal element; that stretch reads PLERKKR. 2 consecutive RRM domains span residues 21-104 and 112-191; these read RKLF…ESGK and KKLF…LSRQ. K22 is covalently cross-linked (Glycyl lysine isopeptide (Lys-Gly) (interchain with G-Cter in SUMO2)). At S29 the chain carries Phosphoserine. R38 carries the omega-N-methylarginine modification. Phosphoserine is present on S85. Position 104 is an N6,N6-dimethyllysine; alternate (K104). Residue K104 forms a Glycyl lysine isopeptide (Lys-Gly) (interchain with G-Cter in SUMO2); alternate linkage. Glycyl lysine isopeptide (Lys-Gly) (interchain with G-Cter in SUMO2) cross-links involve residues K112, K120, and K137. T140 bears the Phosphothreonine mark. A Phosphoserine modification is found at S149. A Glycyl lysine isopeptide (Lys-Gly) (interchain with G-Cter in SUMO2) cross-link involves residue K152. Phosphothreonine is present on T159. Glycyl lysine isopeptide (Lys-Gly) (interchain with G-Cter in SUMO2); alternate cross-links involve residues K168 and K173. An N6-acetyllysine; alternate mark is found at K168 and K173. T176 is subject to Phosphothreonine. A Glycyl lysine isopeptide (Lys-Gly) (interchain with G-Cter in SUMO2) cross-link involves residue K186. 2 positions are modified to phosphoserine: S189 and S201. Residues 193–353 form a disordered region; sequence MQEVQSSRSG…SGGYGGRSRY (161 aa). The segment covering 202–223 has biased composition (gly residues); it reads GRGGNFGFGDSRGGGGNFGPGP. R203 carries the post-translational modification Asymmetric dimethylarginine; alternate. R203 is modified (dimethylated arginine; alternate). An Omega-N-methylarginine; alternate modification is found at R203. S212 carries the phosphoserine modification. R213 is modified (asymmetric dimethylarginine; alternate). At R213 the chain carries Dimethylated arginine; alternate. R213 carries the omega-N-methylarginine; alternate modification. Phosphoserine is present on S225. R228 carries the post-translational modification Omega-N-methylarginine. Phosphoserine is present on residues S231 and S236. The residue at position 238 (R238) is an Omega-N-methylarginine. S259 carries the phosphoserine modification. The residue at position 266 (R266) is an Asymmetric dimethylarginine; alternate. Omega-N-methylarginine; alternate is present on R266. The nuclear targeting sequence stretch occupies residues 308–347; it reads QQPSNYGPMKSGNFGGSRNMGGPYGGGNYGPGGSGGSGGY. The segment covering 320–353 has biased composition (gly residues); it reads NFGGSRNMGGPYGGGNYGPGGSGGSGGYGGRSRY. The residue at position 324 (S324) is a Phosphoserine. At R325 the chain carries Omega-N-methylarginine. At Y331 the chain carries Phosphotyrosine. S341 and S344 each carry phosphoserine. Y347 is modified (phosphotyrosine). R350 is subject to Omega-N-methylarginine.

In terms of assembly, homodimer; dimerization is required for nucleocytoplasmic translocation. Identified in the spliceosome C complex. Identified in a IGF2BP1-dependent mRNP granule complex containing untranslated mRNAs. Interacts with IGF2BP1. Interacts with C9orf72. Interacts with DGCR8. Interacts with TARDBP. Interacts with CKAP5. Interacts with TBK1. Interacts with STING1. Interacts with SRC. Interacts with PPIA/CYPA. Interacts (via C-terminus) with FAM76B; the interaction results in retention of HNRNPA2B1 in the nucleus and inhibition of the NF-kappa-B-mediated inflammatory pathway. Interacts with NF-kappa-B inhibitors NFKBIA and NFKBIE; the interaction may be mediated by the RRM2 domain of HNRNPA2B1, and HNRNPA2B1 may interact simultaneously with FAM76B and either NFKBIA or NFKBIE to form a complex. Asymmetric dimethylation at Arg-266 constitutes the major methylation site. According to a report, methylation affects subcellular location and promotes nuclear localization. According to another report, methylation at Arg-266 does not influence nucleocytoplasmic shuttling. Post-translationally, sumoylated in exosomes, promoting miRNAs-binding. As to expression, in the brain, isoform A2 and isoform B1 are abundant in large ganglion-type neurons, such as Purkinje cells, and are less abundant in neighboring glia cells. Isoform A2 is more abundant than isoform B1 in brain. In testis, isoform A2 and isoform B1 are present in spermatogonia and spermatocytes, but not in spermatids or sperm. Isoform A2 is more abundant in the adrenal medulla than in the cortical cells. Isoform B1 is found in both adrenal medulla and cortical cells. Isoform A2 is more abundant than isoform B1 in the adrenal gland. Isoform A2 and isoform B1 are both detected in pancreas and kidney, and at lower levels in heart and lung. Isoform B1 is more abundant than isoform A2 in heart, lung and intestine (at protein level). Isoform A2b and isoform B1b are testis-specific.

Its subcellular location is the nucleus. It is found in the cytoplasm. The protein localises to the nucleoplasm. The protein resides in the cytoplasmic granule. It localises to the secreted. Its subcellular location is the extracellular exosome. Heterogeneous nuclear ribonucleoprotein (hnRNP) that associates with nascent pre-mRNAs, packaging them into hnRNP particles. The hnRNP particle arrangement on nascent hnRNA is non-random and sequence-dependent and serves to condense and stabilize the transcripts and minimize tangling and knotting. Packaging plays a role in various processes such as transcription, pre-mRNA processing, RNA nuclear export, subcellular location, mRNA translation and stability of mature mRNAs. Forms hnRNP particles with at least 20 other different hnRNP and heterogeneous nuclear RNA in the nucleus. Involved in transport of specific mRNAs to the cytoplasm in oligodendrocytes and neurons: acts by specifically recognizing and binding the A2RE (21 nucleotide hnRNP A2 response element) or the A2RE11 (derivative 11 nucleotide oligonucleotide) sequence motifs present on some mRNAs, and promotes their transport to the cytoplasm. Specifically binds single-stranded telomeric DNA sequences, protecting telomeric DNA repeat against endonuclease digestion. Also binds other RNA molecules, such as primary miRNA (pri-miRNAs): acts as a nuclear 'reader' of the N6-methyladenosine (m6A) mark by specifically recognizing and binding a subset of nuclear m6A-containing pri-miRNAs. Binding to m6A-containing pri-miRNAs promotes pri-miRNA processing by enhancing binding of DGCR8 to pri-miRNA transcripts. Involved in miRNA sorting into exosomes following sumoylation, possibly by binding (m6A)-containing pre-miRNAs. Acts as a regulator of efficiency of mRNA splicing, possibly by binding to m6A-containing pre-mRNAs. Plays a role in the splicing of pyruvate kinase PKM by binding repressively to sequences flanking PKM exon 9, inhibiting exon 9 inclusion and resulting in exon 10 inclusion and production of the PKM M2 isoform. Also plays a role in the activation of the innate immune response. Mechanistically, senses the presence of viral DNA in the nucleus, homodimerizes and is demethylated by JMJD6. In turn, translocates to the cytoplasm where it activates the TBK1-IRF3 pathway, leading to interferon alpha/beta production. The protein is Heterogeneous nuclear ribonucleoproteins A2/B1 of Rattus norvegicus (Rat).